A 240-amino-acid chain; its full sequence is Uridylate kinase (240 aa).

Residue K13–G16 participates in ATP binding. The tract at residues G21–G26 is involved in allosteric activation by GTP. G55 lines the UMP pocket. G56 and R60 together coordinate ATP. UMP contacts are provided by residues D75 and T137 to T144. T164, Y170, and D173 together coordinate ATP.

This sequence belongs to the UMP kinase family. Homohexamer.

The protein resides in the cytoplasm. The enzyme catalyses UMP + ATP = UDP + ADP. It functions in the pathway pyrimidine metabolism; CTP biosynthesis via de novo pathway; UDP from UMP (UMPK route): step 1/1. With respect to regulation, allosterically activated by GTP. Inhibited by UTP. Its function is as follows. Catalyzes the reversible phosphorylation of UMP to UDP. The sequence is that of Uridylate kinase from Aquifex aeolicus (strain VF5).